Consider the following 177-residue polypeptide: Ribulose bisphosphate carboxylase small subunit, chloroplastic 3 (177 aa).

The N-terminal 56 residues, Met-1–Ser-56, are a transit peptide targeting the chloroplast.

It belongs to the RuBisCO small chain family. Heterohexadecamer of 8 large and 8 small subunits.

It is found in the plastid. The protein resides in the chloroplast. Functionally, ruBisCO catalyzes two reactions: the carboxylation of D-ribulose 1,5-bisphosphate, the primary event in carbon dioxide fixation, as well as the oxidative fragmentation of the pentose substrate. Both reactions occur simultaneously and in competition at the same active site. Although the small subunit is not catalytic it is essential for maximal activity. The chain is Ribulose bisphosphate carboxylase small subunit, chloroplastic 3 from Lemna gibba (Swollen duckweed).